The primary structure comprises 147 residues: MKFTKSLLLLIVAVFASSNAAETFSNFQVTNSDANSPCVTTPVELKVNTCQSACGSILNVLPVTGSTSKFTFNQFGAQDTKCAATPTSSNEFTCVDGKSKVAIGSTTYSVVCVPDKTNSSESDSSDSTRIGASFALFALALLSMLAL.

Positions 1 to 20 (MKFTKSLLLLIVAVFASSNA) are cleaved as a signal peptide. The GPI-like-anchor amidated asparagine moiety is linked to residue asparagine 118. N-linked (GlcNAc...) asparagine glycosylation is present at asparagine 118. Residues 119–147 (SSESDSSDSTRIGASFALFALALLSMLAL) constitute a propeptide, removed in mature form.

It belongs to the ponticulin family. In terms of processing, the GPI-like-anchor contains a phosphoceramide group, rather than a phosphatidyl group.

It localises to the cell membrane. The sequence is that of Ponticulin-like protein C3 (ponC3) from Dictyostelium discoideum (Social amoeba).